The chain runs to 1037 residues: Probable inorganic carbon transporter subunit DabA 2 (1037 aa).

Residues C460, D462, H719, and C734 each contribute to the Zn(2+) site.

It belongs to the inorganic carbon transporter (TC 9.A.2) DabA family. In terms of assembly, forms a complex with DabB. The cofactor is Zn(2+).

Its subcellular location is the cell inner membrane. Its function is as follows. Part of an energy-coupled inorganic carbon pump. The protein is Probable inorganic carbon transporter subunit DabA 2 of Nitrobacter winogradskyi (strain ATCC 25391 / DSM 10237 / CIP 104748 / NCIMB 11846 / Nb-255).